Consider the following 817-residue polypeptide: Sorting nexin-29 (817 aa).

The 145-residue stretch at 37–181 (SDSDSRVTCL…ILFAINIDNK (145 aa)) folds into the RUN domain. A phosphoserine mark is found at Ser269, Ser292, Ser293, Ser331, and Ser345. The segment at 271-299 (DDEEDEQSSGDVFKKIPGAGESSEENSDR) is disordered. 2 disordered regions span residues 344–381 (KSID…LDAG) and 417–460 (APLG…LPSA). Over residues 347 to 358 (DDEDADENEDDV) the composition is skewed to acidic residues. Over residues 369-378 (GHSESPEKPL) the composition is skewed to basic and acidic residues. The span at 445-460 (SPPGQESPLSSLLPSA) shows a compositional bias: low complexity. Ser451 is modified (phosphoserine). The stretch at 466–546 (MTVSDLRQAI…VLKVQLKKYV (81 aa)) forms a coiled coil. Ser641 is subject to Phosphoserine. Position 643 is a phosphothreonine (Thr643). Residues Ser644 and Ser648 each carry the phosphoserine modification. A PX domain is found at 658–781 (ALINVWIPSV…PFFVDITPPG (124 aa)). Positions 784–817 (LTKNSRPKVASRFPKLARGHPRETRNVEPQSGDL) are disordered.

Belongs to the sorting nexin family.

In Bos taurus (Bovine), this protein is Sorting nexin-29 (SNX29).